The chain runs to 177 residues: Large ribosomal subunit protein uL6 (177 aa).

It belongs to the universal ribosomal protein uL6 family. In terms of assembly, part of the 50S ribosomal subunit.

Functionally, this protein binds to the 23S rRNA, and is important in its secondary structure. It is located near the subunit interface in the base of the L7/L12 stalk, and near the tRNA binding site of the peptidyltransferase center. The polypeptide is Large ribosomal subunit protein uL6 (Sinorhizobium fredii (strain NBRC 101917 / NGR234)).